The chain runs to 734 residues: MALRFPRFSQGLAQDPTTRRIWFGIATAHDFESHDDITEERLYQNIFASHFGQLAIIFLWTSGNLFHVAWQGNFESWVQDPLHVRPIAHAIWDPHFGQPAVEAFTRGGALGPVNIAYSGVYQWWYTIGLRTNEDLYSGALFLLFLSAISLIAGWLHLQPKWKPSVSWFKNAESRLNHHLSGLFGVSPLAWTGHLVHVAIPGSRGEYVRWNNFLDVLPHPQGLGPLFTGQWNLYAQNPDSSSHLFGTSQGAGTAILTLLGGFHPQTQSLWLTDMAHHHLAIAFIFLVAGHMYRTNFGIGHSIKDLLDAHIPPGGRLGRGHKGLYDTINNSLHFQLGLALASLGVITSLVAQHMYSLPAYAFIAQDFTTQAALYTHHQYIAGFIMTGAFAHGAIFFIRDYNPEQNQDNVLARMLDHKEAIISHLSWASLFLGFHTLGLYVHNDVMLAFGTPEKQILIEPIFAQWIQSAHGKTSYGFDVLLSSTSGPAFNAGRSIWLPGWLNAINENTNSLFLTIGPGDFLVHHAIALGLHTTTLILVKGALDARGSKLMPDKKDFGYSFPCDGPGRGGTCDISAWDAFYLAVFWMLNTIGWVTFYWHWKHITLWQGNVSQFNESSTYLMGWLRDYLWLNSSQLINGYNPFGMNSLSVWAWMFLFGHLVWATGFMFLISWRGYWQELIETLAWAHERTPLANLIRWRDKPVALSIVQARLVGLAHFSVGYIFTYAAFLIASTSGKFG.

A run of 8 helical transmembrane segments spans residues 46–69 (IFAS…FHVA), 135–158 (LYSG…LHLQ), 175–199 (LNHH…HVAI), 273–291 (MAHH…GHMY), 330–353 (LHFQ…QHMY), 369–395 (AALY…IFFI), 417–439 (AIIS…LYVH), and 517–535 (FLVH…LILV). The [4Fe-4S] cluster site is built by Cys559 and Cys568. Transmembrane regions (helical) follow at residues 575 to 596 (AFYL…YWHW) and 643 to 665 (LSVW…MFLI). His654, Met662, and Tyr670 together coordinate chlorophyll a. Trp671 contributes to the phylloquinone binding site. The helical transmembrane segment at 707 to 727 (LVGLAHFSVGYIFTYAAFLIA) threads the bilayer.

Belongs to the PsaA/PsaB family. In terms of assembly, the PsaA/B heterodimer binds the P700 chlorophyll special pair and subsequent electron acceptors. PSI consists of a core antenna complex that captures photons, and an electron transfer chain that converts photonic excitation into a charge separation. The eukaryotic PSI reaction center is composed of at least 11 subunits. It depends on P700 is a chlorophyll a/chlorophyll a' dimer, A0 is one or more chlorophyll a, A1 is one or both phylloquinones and FX is a shared 4Fe-4S iron-sulfur center. as a cofactor.

The protein resides in the plastid. It is found in the chloroplast thylakoid membrane. The catalysed reaction is reduced [plastocyanin] + hnu + oxidized [2Fe-2S]-[ferredoxin] = oxidized [plastocyanin] + reduced [2Fe-2S]-[ferredoxin]. Its function is as follows. PsaA and PsaB bind P700, the primary electron donor of photosystem I (PSI), as well as the electron acceptors A0, A1 and FX. PSI is a plastocyanin-ferredoxin oxidoreductase, converting photonic excitation into a charge separation, which transfers an electron from the donor P700 chlorophyll pair to the spectroscopically characterized acceptors A0, A1, FX, FA and FB in turn. Oxidized P700 is reduced on the lumenal side of the thylakoid membrane by plastocyanin. The sequence is that of Photosystem I P700 chlorophyll a apoprotein A2 from Antirrhinum majus (Garden snapdragon).